The primary structure comprises 294 residues: tRNA dimethylallyltransferase (294 aa).

Position 9–16 (9–16 (GPTASGKS)) interacts with ATP. 11–16 (TASGKS) serves as a coordination point for substrate. An interaction with substrate tRNA region spans residues 155-159 (QRVIR).

Belongs to the IPP transferase family. In terms of assembly, monomer. Requires Mg(2+) as cofactor.

It carries out the reaction adenosine(37) in tRNA + dimethylallyl diphosphate = N(6)-dimethylallyladenosine(37) in tRNA + diphosphate. Catalyzes the transfer of a dimethylallyl group onto the adenine at position 37 in tRNAs that read codons beginning with uridine, leading to the formation of N6-(dimethylallyl)adenosine (i(6)A). In Leuconostoc citreum (strain KM20), this protein is tRNA dimethylallyltransferase.